Here is a 344-residue protein sequence, read N- to C-terminus: Tetraacyldisaccharide 4'-kinase (344 aa).

65-72 serves as a coordination point for ATP; the sequence is HAGGTGKT.

This sequence belongs to the LpxK family.

It catalyses the reaction a lipid A disaccharide + ATP = a lipid IVA + ADP + H(+). Its pathway is glycolipid biosynthesis; lipid IV(A) biosynthesis; lipid IV(A) from (3R)-3-hydroxytetradecanoyl-[acyl-carrier-protein] and UDP-N-acetyl-alpha-D-glucosamine: step 6/6. Functionally, transfers the gamma-phosphate of ATP to the 4'-position of a tetraacyldisaccharide 1-phosphate intermediate (termed DS-1-P) to form tetraacyldisaccharide 1,4'-bis-phosphate (lipid IVA). In Neisseria meningitidis serogroup C / serotype 2a (strain ATCC 700532 / DSM 15464 / FAM18), this protein is Tetraacyldisaccharide 4'-kinase.